Consider the following 317-residue polypeptide: CXXC-type zinc finger protein 5 (317 aa).

The segment covering 1–49 has biased composition (low complexity); the sequence is MSSLSSGPQDTGGSSSSSSNGSSGSGPKAGVADKSAAVAAAAPASVADD. The segment at 1 to 96 is disordered; the sequence is MSSLSSGPQD…GSGGGSMMGG (96 aa). The segment covering 83 to 94 has biased composition (gly residues); that stretch reads GGSGGSGGGSMM. The CXXC-type zinc finger occupies 251-292; it reads GKKKRKRCGMCAPCRRRINCEQCSSCRNRKTGHQICKFRKCE. The short motif at 252–257 is the Nuclear localization signal element; that stretch reads KKKRKR. Residues Cys-258, Cys-261, Cys-264, Cys-270, Cys-273, Cys-276, Cys-286, and Cys-291 each coordinate Zn(2+).

As to quaternary structure, interacts with DVL1. Interacts with RBPJ.

The protein resides in the nucleus. The protein localises to the cytoplasm. Functionally, may indirectly participate in activation of the NF-kappa-B and MAPK pathways. Acts as a mediator of BMP4-mediated modulation of canonical Wnt signaling activity in neural stem cells. Required for DNA damage-induced ATM phosphorylation, p53 activation and cell cycle arrest. Involved in myelopoiesis. Binds to the oxygen responsive element of COX4I2 and represses its transcription under hypoxia conditions (4% oxygen), as well as normoxia conditions (20% oxygen). May repress COX4I2 transactivation induced by CHCHD2 and RBPJ. Binds preferentially to DNA containing cytidine-phosphate-guanosine (CpG) dinucleotides over CpH (H=A, T, and C), hemimethylated-CpG and hemimethylated-hydroxymethyl-CpG. The protein is CXXC-type zinc finger protein 5 (CXXC5) of Bos taurus (Bovine).